The chain runs to 541 residues: MNTQPLERALAAFREVLGTAHVSTDESARAAAETATFATTHRIPAIISPGSAAEVEACVRIAREHGVPLYPVSTGKNWGYGSRVPTSDGAIVLSLARMNRILDFNEELAYVAIEPGVTMRQLVAYLNDRGSRLMLSVTGSTPDSSVVGNICDRGFGAGVNAERIAHICNIEVVLPNGERLNTGFGRFPGAQTASIHRWGIGPQLDGLFTQSNLGIVTRMTIWLAPRPRHHEIFYFRLRDERRVEAVTDIIRDLKLQGLPRASVSLWNDYKLVSMKGQYPWQEAAGKTPLPEALLAKLRRAWGGAAWLGGGAILAASQDQIAAERAVIRKALHPHVDKLSFVGQRAARVARLLQRPVQRLTGFDLSEVVRAYEQSPHLGIPMERNIRSAYWRKKAPPPEQTDPDRDRCGAIWLAPAVPSTGKHVGTALRIVRERALAHAFEPGISVIFATERCANIVVALMYDRELPGEDGRAMACYQDIFDRLAAQGYLPYRLGIQSQSALPAAQSSYGTVVGALKRALDPDDILAPGRYDFRHEWPPADN.

Residues 39 to 226 (TTHRIPAIIS…TRMTIWLAPR (188 aa)) enclose the FAD-binding PCMH-type domain.

It catalyses the reaction 1'-carboxy-chondrochloren A + FAD + 2 H(+) = chondrochloren A + FADH2 + CO2. It carries out the reaction 1'-carboxy-chondrochloren B + FAD + 2 H(+) = chondrochloren B + FADH2 + CO2. The protein operates within antibiotic biosynthesis. Activity is not affected by the addition of EDTA or/and EGTA chelators or in the presence of external metals like Zn(2+), Mg(2+), Mn(2+) and Fe(2+). Activity is inhibited under low oxygen conditions. Functionally, oxidative decarboxylase involved in the biosynthesis of the antibiotics chondrochloren A and chondrochloren B. Catalyzes the decarboxylation of biologically inactive pre-chondrochloren A and pre-chondrochloren B to yield mature chondrochloren A and chondrochloren B, respectively. Cannot decarboxylate free L-tyrosine, 3-chloro-tyrosine or a number of chlorinated and non-chlorinated analog substrates containing variable N-acyl chains. This is 1'-carboxy-chondrochloren decarboxylase from Chondromyces crocatus.